A 325-amino-acid polypeptide reads, in one-letter code: Helicase VP6-A (325 aa).

Disordered regions lie at residues 1–127 (MLLA…NGRR) and 174–230 (EGVA…EPAR). Basic and acidic residues-rich tracts occupy residues 8-18 (VIKRSSEELKQ), 32-54 (EGGKENKTEPKEESKAEGSKDGE), 61-79 (GQKEEGGKETKDADVDRRI), and 92-105 (PGERANENADRGDG). An ATP-binding site is contributed by lysine 106. A compositionally biased stretch (gly residues) spans 106–122 (KVGGGGGDADAGVGATG). Residues 175–229 (GVAEQTERSRDLRRKEKNGTHAKAVERGGRKQRKESHGDAQREGVEEEKTSEEPA) are compositionally biased toward basic and acidic residues.

The protein belongs to the orbivirus VP6 family. As to quaternary structure, homohexamer.

Its subcellular location is the virion. It carries out the reaction ATP + H2O = ADP + phosphate + H(+). Functionally, ATP dependent RNA helicase essential for RNA packaging and viral transcription. Possesses ss- and dsRNA-binding capacity. This Bluetongue virus 13 (isolate USA) (BTV 13) protein is Helicase VP6-A (Segment-9).